Consider the following 233-residue polypeptide: 2-C-methyl-D-erythritol 4-phosphate cytidylyltransferase (233 aa).

The protein belongs to the IspD/TarI cytidylyltransferase family. IspD subfamily.

It carries out the reaction 2-C-methyl-D-erythritol 4-phosphate + CTP + H(+) = 4-CDP-2-C-methyl-D-erythritol + diphosphate. The protein operates within isoprenoid biosynthesis; isopentenyl diphosphate biosynthesis via DXP pathway; isopentenyl diphosphate from 1-deoxy-D-xylulose 5-phosphate: step 2/6. Its function is as follows. Catalyzes the formation of 4-diphosphocytidyl-2-C-methyl-D-erythritol from CTP and 2-C-methyl-D-erythritol 4-phosphate (MEP). The chain is 2-C-methyl-D-erythritol 4-phosphate cytidylyltransferase from Carboxydothermus hydrogenoformans (strain ATCC BAA-161 / DSM 6008 / Z-2901).